The primary structure comprises 124 residues: Fluoride-specific ion channel FluC (124 aa).

4 helical membrane-spanning segments follow: residues 4 to 24, 35 to 55, 60 to 80, and 102 to 122; these read LLLVALGGSIGAVFRYLISIF, FGTLLVNVLGSFLMGVIYALG, ISPEFKALIGVGLLGALTTFS, and VVLNLSLCLFMVYLGQQLVFS. Na(+) is bound by residues G74 and T77.

Belongs to the fluoride channel Fluc/FEX (TC 1.A.43) family.

The protein resides in the cell inner membrane. The catalysed reaction is fluoride(in) = fluoride(out). Na(+) is not transported, but it plays an essential structural role and its presence is essential for fluoride channel function. Its function is as follows. Fluoride-specific ion channel. Important for reducing fluoride concentration in the cell, thus reducing its toxicity. This Shewanella oneidensis (strain ATCC 700550 / JCM 31522 / CIP 106686 / LMG 19005 / NCIMB 14063 / MR-1) protein is Fluoride-specific ion channel FluC.